The primary structure comprises 416 residues: LL-diaminopimelate aminotransferase (416 aa).

Residues tyrosine 15 and glycine 42 each coordinate substrate. Residues tyrosine 72, 108–109 (SK), tyrosine 132, asparagine 187, tyrosine 218, and 246–248 (SFS) contribute to the pyridoxal 5'-phosphate site. The substrate site is built by lysine 109, tyrosine 132, and asparagine 187. Lysine 249 carries the post-translational modification N6-(pyridoxal phosphate)lysine. Positions 257 and 292 each coordinate pyridoxal 5'-phosphate. Asparagine 292 and arginine 388 together coordinate substrate.

This sequence belongs to the class-I pyridoxal-phosphate-dependent aminotransferase family. LL-diaminopimelate aminotransferase subfamily. Homodimer. Requires pyridoxal 5'-phosphate as cofactor.

The enzyme catalyses (2S,6S)-2,6-diaminopimelate + 2-oxoglutarate = (S)-2,3,4,5-tetrahydrodipicolinate + L-glutamate + H2O + H(+). It functions in the pathway amino-acid biosynthesis; L-lysine biosynthesis via DAP pathway; LL-2,6-diaminopimelate from (S)-tetrahydrodipicolinate (aminotransferase route): step 1/1. Its function is as follows. Involved in the synthesis of meso-diaminopimelate (m-DAP or DL-DAP), required for both lysine and peptidoglycan biosynthesis. Catalyzes the direct conversion of tetrahydrodipicolinate to LL-diaminopimelate. The chain is LL-diaminopimelate aminotransferase from Synechococcus sp. (strain JA-2-3B'a(2-13)) (Cyanobacteria bacterium Yellowstone B-Prime).